The sequence spans 675 residues: Methionine--tRNA ligase (675 aa).

The 'HIGH' region motif lies at 15–25 (PYANGPIHLGH). Zn(2+) is bound by residues cysteine 146, cysteine 149, cysteine 159, and cysteine 162. A 'KMSKS' region motif is present at residues 332 to 336 (KMSKS). An ATP-binding site is contributed by lysine 335. The tRNA-binding domain occupies 574 to 675 (DFAKIDLRVA…AGAKPGMRVK (102 aa)).

Belongs to the class-I aminoacyl-tRNA synthetase family. MetG type 1 subfamily. As to quaternary structure, homodimer. Zn(2+) serves as cofactor.

Its subcellular location is the cytoplasm. It carries out the reaction tRNA(Met) + L-methionine + ATP = L-methionyl-tRNA(Met) + AMP + diphosphate. Is required not only for elongation of protein synthesis but also for the initiation of all mRNA translation through initiator tRNA(fMet) aminoacylation. The chain is Methionine--tRNA ligase from Shewanella amazonensis (strain ATCC BAA-1098 / SB2B).